The sequence spans 483 residues: Pentatricopeptide repeat-containing protein At5g18950 (483 aa).

PPR repeat units follow at residues Glu144–Ser178, Ser179–Ser213, Cys218–Pro246, Gly247–Pro281, Ser282–Pro316, Asp317–Pro351, Asn352–Gly386, Thr387–Pro421, and Asn422–Pro456.

The protein belongs to the PPR family. P subfamily.

This chain is Pentatricopeptide repeat-containing protein At5g18950, found in Arabidopsis thaliana (Mouse-ear cress).